The primary structure comprises 164 residues: Protein SprT (164 aa).

Positions 13–156 (YQQAEAFFKR…LCRRCREPLV (144 aa)) constitute a SprT-like domain. Residue histidine 69 participates in Zn(2+) binding. Residue glutamate 70 is part of the active site. Histidine 73 contacts Zn(2+).

Belongs to the SprT family. It depends on Zn(2+) as a cofactor.

The protein resides in the cytoplasm. This chain is Protein SprT, found in Pseudomonas syringae pv. syringae (strain B728a).